Reading from the N-terminus, the 140-residue chain is 3-hydroxyacyl-[acyl-carrier-protein] dehydratase FabZ (140 aa).

The active site involves His-46.

The protein belongs to the thioester dehydratase family. FabZ subfamily.

It is found in the cytoplasm. The enzyme catalyses a (3R)-hydroxyacyl-[ACP] = a (2E)-enoyl-[ACP] + H2O. In terms of biological role, involved in unsaturated fatty acids biosynthesis. Catalyzes the dehydration of short chain beta-hydroxyacyl-ACPs and long chain saturated and unsaturated beta-hydroxyacyl-ACPs. In Pseudothermotoga lettingae (strain ATCC BAA-301 / DSM 14385 / NBRC 107922 / TMO) (Thermotoga lettingae), this protein is 3-hydroxyacyl-[acyl-carrier-protein] dehydratase FabZ.